A 258-amino-acid polypeptide reads, in one-letter code: Acyl-[acyl-carrier-protein]--UDP-N-acetylglucosamine O-acyltransferase (258 aa).

Belongs to the transferase hexapeptide repeat family. LpxA subfamily. Homotrimer.

Its subcellular location is the cytoplasm. The enzyme catalyses a (3R)-hydroxyacyl-[ACP] + UDP-N-acetyl-alpha-D-glucosamine = a UDP-3-O-[(3R)-3-hydroxyacyl]-N-acetyl-alpha-D-glucosamine + holo-[ACP]. The protein operates within glycolipid biosynthesis; lipid IV(A) biosynthesis; lipid IV(A) from (3R)-3-hydroxytetradecanoyl-[acyl-carrier-protein] and UDP-N-acetyl-alpha-D-glucosamine: step 1/6. Involved in the biosynthesis of lipid A, a phosphorylated glycolipid that anchors the lipopolysaccharide to the outer membrane of the cell. This is Acyl-[acyl-carrier-protein]--UDP-N-acetylglucosamine O-acyltransferase from Stutzerimonas stutzeri (strain A1501) (Pseudomonas stutzeri).